Reading from the N-terminus, the 479-residue chain is Adenosylhomocysteinase (479 aa).

Residues T65, D145, and E205 each coordinate substrate. 206 to 208 serves as a coordination point for NAD(+); the sequence is TTT. Residues K235 and D239 each contribute to the substrate site. NAD(+) is bound by residues N240, 269 to 274, E292, N327, 348 to 350, and N393; these read GYGDVG and IGH.

The protein belongs to the adenosylhomocysteinase family. NAD(+) is required as a cofactor.

The protein localises to the cytoplasm. The catalysed reaction is S-adenosyl-L-homocysteine + H2O = L-homocysteine + adenosine. Its pathway is amino-acid biosynthesis; L-homocysteine biosynthesis; L-homocysteine from S-adenosyl-L-homocysteine: step 1/1. May play a key role in the regulation of the intracellular concentration of adenosylhomocysteine. In Herminiimonas arsenicoxydans, this protein is Adenosylhomocysteinase.